A 161-amino-acid chain; its full sequence is Nucleotide-binding protein PBPRA2024 (161 aa).

This sequence belongs to the YajQ family.

In terms of biological role, nucleotide-binding protein. The chain is Nucleotide-binding protein PBPRA2024 from Photobacterium profundum (strain SS9).